Here is a 207-residue protein sequence, read N- to C-terminus: MREAIIKRAAKELKEGMYVNLGIGLPTLVANEVSGMNIVFQSENGLLGIGAYPLEGGVDADLINAGKETITVVPGASFFNSADSFAMIRGGHIDLAILGGMEVSQNGDLANWMIPKKLIKGMGGAMDLVHGAKKVIVIMEHCNKYGESKVKKECSLPLTGKGVVHQLITDLAVFEFSNNAMELVELQEGVSLDQVKEKTEAEFEVHL.

The active site involves glutamate 43.

It belongs to the 3-oxoacid CoA-transferase subunit B family. As to quaternary structure, heterodimer of a subunit A and a subunit B.

It catalyses the reaction a 3-oxo acid + succinyl-CoA = a 3-oxoacyl-CoA + succinate. This Helicobacter pylori (strain J99 / ATCC 700824) (Campylobacter pylori J99) protein is Succinyl-CoA:3-ketoacid coenzyme A transferase subunit B (scoB).